The sequence spans 361 residues: Methyltransferase LUC1 (361 aa).

Residues Y18, N66, D89, S126, and F127 each contribute to the S-adenosyl-L-homocysteine site. The Mg(2+) site is built by Q156 and F233.

The protein belongs to the methyltransferase superfamily. Type-7 methyltransferase family. Requires Mg(2+) as cofactor.

Its pathway is mycotoxin biosynthesis. Methyltransferase; part of the gene cluster that mediates the biosynthesis of the mycotoxin lucilactaene and the lucilactaene-related compound NG-391 that act as cell cycle inhibitors with potent growth inhibitory activity against malarial parasites, moderate growth inhibitory activity against cancer cells, and no activity against bacteria and fungi. LUC1 performs the last step of the pathway and methylates the hydroxyl group of demethyllucilactaene at C-21 to yeald lucilactaene. The pathway begins with the hybrid PKS-NRPS synthetase LUC5 which is responsible for the condensation of one acetyl-coenzyme A (CoA) unit with six malonyl-CoA units and the amide linkage of the arising heptaketide and homoserine, subsequently releasing the first intermediate prelucilactaene B. Both the cytochrome P450 monooxygenase LUC2 and the hydrolase LUC6 function in parallel in modification of prelucilactaene B. LUC6 may catalyze the 2-pyrrolidone ring formation to form prelucilactaene C from prelucilactaene B, followed by C-15 hydroxylation by the same enzyme to give prelucilactaene D, which is then converted to prelucilactaene E by epoxidation, and finally to prelucilactaene F by cyclization. Prelucilactane D, prelucilactaene E, and prelucilactaene F can be converted to dihydrolucilactaene, NG391, and lucilactaene, respectively, via C-20 methyl group hydroxylation by the cytochrome P450 monooxygenase LUC2. However, LUC2, unlike FUS8 in fusarin C biosynthesis, is not enough for the full oxidation of the C-20 methyl group into carboxylic acid, which is a prerequisite for the final methylation step. The aldehyde dehydrogenase LUC3 is involved in the biosynthesis by further oxidation of the C-20 alcoholic analog prelucilactaene G into a carboxylic derivative. This unidentified carboxylic derivative may be converted to demethyllucilactaene. As the last step, the methyltransferase LUC1 methylates the hydroxyl group at C-21 of demethyllucilactaene to generate lucilactaene. In Fusarium sp, this protein is Methyltransferase LUC1.